A 162-amino-acid polypeptide reads, in one-letter code: Large ribosomal subunit protein uL15 (162 aa).

The disordered stretch occupies residues M1–R41. The span at R21–G37 shows a compositional bias: gly residues.

Belongs to the universal ribosomal protein uL15 family. In terms of assembly, part of the 50S ribosomal subunit.

Its function is as follows. Binds to the 23S rRNA. The protein is Large ribosomal subunit protein uL15 of Rhodopseudomonas palustris (strain BisB18).